The sequence spans 89 residues: Small ribosomal subunit protein uS15 (89 aa).

The span at 1–21 (MALTTEEKKQVLSEYGLHETD) shows a compositional bias: basic and acidic residues. The interval 1–24 (MALTTEEKKQVLSEYGLHETDTGS) is disordered.

Belongs to the universal ribosomal protein uS15 family. In terms of assembly, part of the 30S ribosomal subunit. Forms a bridge to the 50S subunit in the 70S ribosome, contacting the 23S rRNA.

Functionally, one of the primary rRNA binding proteins, it binds directly to 16S rRNA where it helps nucleate assembly of the platform of the 30S subunit by binding and bridging several RNA helices of the 16S rRNA. In terms of biological role, forms an intersubunit bridge (bridge B4) with the 23S rRNA of the 50S subunit in the ribosome. The sequence is that of Small ribosomal subunit protein uS15 from Rhodococcus opacus (strain B4).